Here is a 784-residue protein sequence, read N- to C-terminus: MPGVIPSESNGLSRGSPSKKNRLSLKFFQKKETKRALDFTDSQENEEKTSEYRGSEIDQVVPAAQSSPVSCEKRENLLPFVGLNNLGNTCYLNSILQVLYFCPGFKTGVKHLFNIISRKKEALKDDSNQKDKGSCKEESLASYELICSLQSLIISVEQLQASFLLNPEKYTDELATQPRRLLNTLRELNPMYEGFLQHDAQEVLQCILGNIQETCQLLKKEEIKNLAELSGKVEEQSLQKEETGGITSTEIDSMRNTEDVKEQLPKGNWKRKSDSESSNVKKKVKLSRESQPLEENQRQTRSKRKAIGDTLEAAPKIIPKCVSESESAKPSQKKSKVKINWLKPSTKQPSILSKFCSLGKITTNQRSKGQPKEKEGDVEEDLEKYGSDHTANGGPESPGSSVTPVDSSEAKSGNKGAEQIGFELVEKLFQGQLVLRTRCLECESLTERREDFQDISVPVQEDELSKVEESSEISPEPKTEMKTLRWAISQFASVERIVGEDKYFCENCHHYTEAERSLLFDKMPEVITIHLKCFAASGLEFDCYGGGLSKINTPLLTPLKLSLEEWSTKPTNDSYGLFAVVMHSGITISSGHYTASVKVTDLNSLELDEGNFVVDQMCELGKPEPLTEEQARGTAGNYDDEVSIRVGGNAQPSKVLNKKNVEGIGLLGGQKSKADYELYNKASNPDKVVGTPFTDNRNSETNDTTNGTHESDRNKESSDQTGVNMNGLENKISYVVQSLKEYEGKWLLFDDSEVKVTEEKDFLNSLSPSTSPTSTPYLLFYKKL.

2 disordered regions span residues 1 to 21 and 34 to 56; these read MPGV…SKKN and KRAL…RGSE. A compositionally biased stretch (polar residues) spans 7–16; that stretch reads SESNGLSRGS. 2 positions are modified to phosphoserine: S16 and S42. Basic and acidic residues predominate over residues 45–56; the sequence is NEEKTSEYRGSE. Position 67 is a phosphoserine (S67). The USP domain maps to 81 to 784; the sequence is VGLNNLGNTC…TPYLLFYKKL (704 aa). The active-site Nucleophile is the C90. 2 stretches are compositionally biased toward basic and acidic residues: residues 233-243 and 252-264; these read VEEQSLQKEET and DSMR…KEQL. 2 disordered regions span residues 233–342 and 362–414; these read VEEQ…INWL and TTNQ…KSGN. S474 is modified (phosphoserine). H592 (proton acceptor) is an active-site residue. Positions 684–725 are disordered; it reads NPDKVVGTPFTDNRNSETNDTTNGTHESDRNKESSDQTGVNM. Residues 693–708 show a composition bias toward polar residues; that stretch reads FTDNRNSETNDTTNGT. Over residues 709–718 the composition is skewed to basic and acidic residues; the sequence is HESDRNKESS. Phosphoserine is present on S767.

The protein belongs to the peptidase C19 family. As to quaternary structure, interacts with FANCD2 and PCNA. Interacts with WDR48. Interacts with ATAD5; the interaction regulates USP1-mediated PCNA deubiquitination. Post-translationally, autocatalytic cleavage of USP1 following UV irradiation inactivates it, leading to an increase in ubiquitinated PCNA, recruitment of POLH and translesion synthesis. In terms of processing, ubiquitinated by the CRL2(KLHDC2) complex following autocatalytic cleavage, leading to its degradation: the CRL2(KLHDC2) complex recognizes the diglycine (Gly-Gly) at the C-terminus.

It is found in the nucleus. The enzyme catalyses Thiol-dependent hydrolysis of ester, thioester, amide, peptide and isopeptide bonds formed by the C-terminal Gly of ubiquitin (a 76-residue protein attached to proteins as an intracellular targeting signal).. Functionally, negative regulator of DNA damage repair which specifically deubiquitinates monoubiquitinated FANCD2. Also involved in PCNA-mediated translesion synthesis (TLS) by deubiquitinating monoubiquitinated PCNA. Has almost no deubiquitinating activity by itself and requires the interaction with WDR48 to have a high activity. The protein is Ubiquitin carboxyl-terminal hydrolase 1 of Mus musculus (Mouse).